The chain runs to 129 residues: MAKEATRVKRRERKNIASGVAHVNASFNNTMITITDAQGNTISWSSAGAMGFKGSRKSTPYAAQVAAEDAARKAAEHGMRTLEVEVSGPGSGRESALRALQAAGFLVTSIRDVTPIPHNGCRPRKRRRV.

The protein belongs to the universal ribosomal protein uS11 family. In terms of assembly, part of the 30S ribosomal subunit. Interacts with proteins S7 and S18. Binds to IF-3.

In terms of biological role, located on the platform of the 30S subunit, it bridges several disparate RNA helices of the 16S rRNA. Forms part of the Shine-Dalgarno cleft in the 70S ribosome. This chain is Small ribosomal subunit protein uS11, found in Xanthobacter autotrophicus (strain ATCC BAA-1158 / Py2).